A 228-amino-acid polypeptide reads, in one-letter code: Translin (228 aa).

The segment at 86–90 is DNA/RNA binding; the sequence is RFHEH. Positions 177–198 are leucine-zipper; it reads LDSGFRLLNLKNDSLRKRYDGL. Lysine 187 carries the post-translational modification N6-acetyllysine. Serine 190 carries the phosphoserine modification. Lysine 199 bears the N6-acetyllysine mark.

The protein belongs to the translin family. In terms of assembly, ring-shaped heterooctamer of six TSN and two TSNAX subunits, DNA/RNA binding occurs inside the ring.

The protein resides in the cytoplasm. The protein localises to the nucleus. DNA-binding protein that specifically recognizes consensus sequences at the breakpoint junctions in chromosomal translocations, mostly involving immunoglobulin (Ig)/T-cell receptor gene segments. Seems to recognize single-stranded DNA ends generated by staggered breaks occurring at recombination hot spots. In terms of biological role, exhibits both single-stranded and double-stranded endoribonuclease activity. May act as an activator of RNA-induced silencing complex (RISC) by facilitating endonucleolytic cleavage of the siRNA passenger strand. The sequence is that of Translin (TSN) from Pongo abelii (Sumatran orangutan).